Reading from the N-terminus, the 355-residue chain is uncharacterized protein (355 aa).

Residues 1-49 (MPMTVVSGRFSTALLPTCFSLSRLHSVKYAAQRRVVFVSRSAHASSASV) constitute a chloroplast transit peptide.

It belongs to the methyltransferase superfamily.

It is found in the plastid. It localises to the chloroplast. Its subcellular location is the plastoglobule. This is an uncharacterized protein from Arabidopsis thaliana (Mouse-ear cress).